The chain runs to 195 residues: CASP-like protein Os03g0196400 (195 aa).

Topologically, residues 1-38 (MRQQQAGGVGDGVSPGNVPVCYYGPGGRVPSSLERRAR) are cytoplasmic. The helical transmembrane segment at 39–59 (AAEVLLRCAACGLAVLAAALL) threads the bilayer. Residues 60-81 (GADRQTRVFFSIQKVARYTDMQ) lie on the Extracellular side of the membrane. The chain crosses the membrane as a helical span at residues 82–102 (SLVLLVIANGMAACYSLIQCA). At 103–104 (RC) the chain is on the cytoplasmic side. The helical transmembrane segment at 105–125 (LVMAYIVISAVAAAMEAALIG) threads the bilayer. Over 126–150 (KYGQPEFQWMKTCHLYKRFCAQAGG) the chain is Extracellular. A helical membrane pass occupies residues 151-171 (GVACAIAASVNMVGVALISAF). Topologically, residues 172–195 (NLFRLYGNSNGGGKATTTTMAGGK) are cytoplasmic.

The protein belongs to the Casparian strip membrane proteins (CASP) family. In terms of assembly, homodimer and heterodimers.

It is found in the cell membrane. The polypeptide is CASP-like protein Os03g0196400 (Oryza sativa subsp. japonica (Rice)).